We begin with the raw amino-acid sequence, 299 residues long: ATP phosphoribosyltransferase (299 aa).

This sequence belongs to the ATP phosphoribosyltransferase family. Long subfamily. Equilibrium between an active dimeric form, an inactive hexameric form and higher aggregates. Interconversion between the various forms is largely reversible and is influenced by the natural substrates and inhibitors of the enzyme. Mg(2+) serves as cofactor.

The protein resides in the cytoplasm. The enzyme catalyses 1-(5-phospho-beta-D-ribosyl)-ATP + diphosphate = 5-phospho-alpha-D-ribose 1-diphosphate + ATP. It functions in the pathway amino-acid biosynthesis; L-histidine biosynthesis; L-histidine from 5-phospho-alpha-D-ribose 1-diphosphate: step 1/9. Its activity is regulated as follows. Feedback inhibited by histidine. Catalyzes the condensation of ATP and 5-phosphoribose 1-diphosphate to form N'-(5'-phosphoribosyl)-ATP (PR-ATP). Has a crucial role in the pathway because the rate of histidine biosynthesis seems to be controlled primarily by regulation of HisG enzymatic activity. This Pectobacterium atrosepticum (strain SCRI 1043 / ATCC BAA-672) (Erwinia carotovora subsp. atroseptica) protein is ATP phosphoribosyltransferase.